Reading from the N-terminus, the 973-residue chain is DNA repair protein rhp26 (973 aa).

The stretch at 35–107 forms a coiled coil; sequence ESREIEKKRL…DIKRRLNNED (73 aa). The segment at 230–251 is disordered; the sequence is RDQASASENNKDRGEFEGKDEW. Residues 238-251 are compositionally biased toward basic and acidic residues; that stretch reads NNKDRGEFEGKDEW. The Helicase ATP-binding domain occupies 289-490; sequence WELYCQEAGG…WNLFDFVFPG (202 aa). 302 to 309 contributes to the ATP binding site; that stretch reads DEMGLGKT. Residues 367-386 are disordered; sequence SREKRQYESDASESEAEESK. Positions 441–444 match the DEAH box motif; it reads DEGH. The region spanning 629 to 789 is the Helicase C-terminal domain; the sequence is VIRALLTLWK…RRFFKMTDLH (161 aa). Disordered regions lie at residues 803 to 846, 863 to 882, and 930 to 973; these read ETGS…KGKK, KYKPPQESNVTKTNSDSTLG, and AVSS…KQRR. The segment covering 834–846 has biased composition (basic residues); it reads DRKKHKIHDKGKK. 2 stretches are compositionally biased toward polar residues: residues 868-882 and 947-965; these read QESNVTKTNSDSTLG and STNVPGTSKPSGPITSSTL.

Its subcellular location is the cytoplasm. It is found in the nucleus. Its function is as follows. Involved in transcription-coupled repair (TCR). This chain is DNA repair protein rhp26 (rhp26), found in Schizosaccharomyces pombe (strain 972 / ATCC 24843) (Fission yeast).